Here is a 474-residue protein sequence, read N- to C-terminus: A-type ATP synthase subunit B (474 aa).

Belongs to the ATPase alpha/beta chains family. As to quaternary structure, has multiple subunits with at least A(3), B(3), C, D, E, F, H, I and proteolipid K(x).

It is found in the cell membrane. Functionally, component of the A-type ATP synthase that produces ATP from ADP in the presence of a proton gradient across the membrane. The B chain is a regulatory subunit. The protein is A-type ATP synthase subunit B of Halorubrum lacusprofundi (strain ATCC 49239 / DSM 5036 / JCM 8891 / ACAM 34).